The primary structure comprises 206 residues: Small ribosomal subunit protein uS4 (206 aa).

The disordered stretch occupies residues 18–45 (NIWGRPKSPVNRREYGPGQHGQRRKGKM). In terms of domain architecture, S4 RNA-binding spans 94–157 (RRLDAVVYRA…KQLASVLEAV (64 aa)).

Belongs to the universal ribosomal protein uS4 family. As to quaternary structure, part of the 30S ribosomal subunit. Contacts protein S5. The interaction surface between S4 and S5 is involved in control of translational fidelity.

One of the primary rRNA binding proteins, it binds directly to 16S rRNA where it nucleates assembly of the body of the 30S subunit. In terms of biological role, with S5 and S12 plays an important role in translational accuracy. The sequence is that of Small ribosomal subunit protein uS4 from Ruegeria pomeroyi (strain ATCC 700808 / DSM 15171 / DSS-3) (Silicibacter pomeroyi).